We begin with the raw amino-acid sequence, 20 residues long: Dermaseptin-N1 (20 aa).

Position 20 is a leucine amide (leucine 20).

Expressed by the skin glands.

The protein localises to the secreted. Antimicrobial peptide with moderate activity against both Gram-positive and Gram-negative bacteria, and important activity against Leishmania species (L.amazonensis and L.infantum). Acts on both Leishmania promastigote and amastigote forms. Shows activity against E.coli (MIC=17.8 uM), S.aureus (MIC=32.3 uM) and the phytopathogenic bacterium Xanthomonas axonopodis (MIC=2 uM). Shows low cytotoxicity against mammalian cells in models of peritoneal macrophages. The sequence is that of Dermaseptin-N1 from Pithecopus nordestinus (Northeastern Brazilian leaf frog).